We begin with the raw amino-acid sequence, 314 residues long: Probable cell division protein WhiA (314 aa).

The segment at residues 274–305 is a DNA-binding region (H-T-H motif); that stretch reads SLAELGDRLEISKSGANHRMRKLKALEDMINA.

Belongs to the WhiA family.

Its function is as follows. Involved in cell division and chromosome segregation. This chain is Probable cell division protein WhiA, found in Leuconostoc citreum (strain KM20).